The sequence spans 79 residues: Hematopoietic cell signal transducer (79 aa).

The N-terminal stretch at 1–17 (MDPPGYLLFLLLLPVAA) is a signal peptide. Topologically, residues 18 to 35 (SQTSAGSCSGCGTLSLPL) are extracellular. Residues 36–56 (LAGLVAADAVMSLLIVGVVFV) form a helical membrane-spanning segment. At 57–79 (CMRPHGRPAQEDGRVYINMPGRG) the chain is on the cytoplasmic side. Phosphotyrosine is present on Tyr-72. The GRB2 binding site stretch occupies residues 72-74 (YIN). Residues 72-75 (YINM) form a PIK3R1 binding site region.

It belongs to the DAP10 family. In terms of assembly, homodimer; Disulfide-linked. Interacts with KLRK1 to form a stable complex, which results in surface expression of both proteins, whereas alone, it is minimally expressed. Interacts with PIK3R1 and GRB2. Interacts with CLEC5A. Forms an CLEC5A/TYROBP/HCST trimolecular complex depending almost solely on TYROBP. Heterohexamer composed of four subunits of HCST/DAP10 and two subunits of KLRK1. Interacts (via transmembrane domain) with KLRK1 isoform 1 (via transmembrane domain); the interaction is required for KLRK1 cell surface expression on naive NK cells and activated CD8(+) T-cells, but is dispensable on activated TYROBP-expressing NK cells. Interacts (via transmembrane domain) with KLRK1 isoform 2 (via transmembrane domain); the interaction is required for KLRK1 NK cell surface expression and induces NK cell-mediated cytotoxicity. Interacts with CD300H. Post-translationally, phosphorylated; PIK3R1 and GRB2 associate specifically with tyrosine-phosphorylated HCST. O-glycosylated.

The protein resides in the membrane. Its function is as follows. Transmembrane adapter protein which associates with KLRK1 to form an activation receptor KLRK1-HCST in lymphoid and myeloid cells; this receptor plays a major role in triggering cytotoxicity against target cells expressing cell surface ligands such as MHC class I chain-related MICA and MICB, and UL16-binding proteins (ULBPs); these ligands are up-regulated by stress conditions and pathological state such as viral infection and tumor transformation. Functions as a docking site for PI3-kinase PIK3R1 and GRB2. Interaction of ULBPs with KLRK1-HCST triggers calcium mobilization and activation of the PIK3R1, MAP2K/ERK, and JAK2/STAT5 signaling pathways. Both PIK3R1 and GRB2 are required for full KLRK1-HCST-mediated activation and ultimate killing of target cells. In NK cells, KLRK1-HCST signaling directly induces cytotoxicity and enhances cytokine production initiated via DAP12/TYROBP-associated receptors. In T-cells, it provides primarily costimulation for TCR-induced signals. KLRK1-HCST receptor plays a role in immune surveillance against tumors and is required for cytolysis of tumors cells; indeed, melanoma cells that do not express KLRK1 ligands escape from immune surveillance mediated by NK cells. This chain is Hematopoietic cell signal transducer (Hcst), found in Mus musculus (Mouse).